A 306-amino-acid chain; its full sequence is Methionyl-tRNA formyltransferase (306 aa).

110–113 (SLLP) is a (6S)-5,6,7,8-tetrahydrofolate binding site.

Belongs to the Fmt family.

The catalysed reaction is L-methionyl-tRNA(fMet) + (6R)-10-formyltetrahydrofolate = N-formyl-L-methionyl-tRNA(fMet) + (6S)-5,6,7,8-tetrahydrofolate + H(+). In terms of biological role, attaches a formyl group to the free amino group of methionyl-tRNA(fMet). The formyl group appears to play a dual role in the initiator identity of N-formylmethionyl-tRNA by promoting its recognition by IF2 and preventing the misappropriation of this tRNA by the elongation apparatus. This chain is Methionyl-tRNA formyltransferase, found in Brucella anthropi (strain ATCC 49188 / DSM 6882 / CCUG 24695 / JCM 21032 / LMG 3331 / NBRC 15819 / NCTC 12168 / Alc 37) (Ochrobactrum anthropi).